Here is a 476-residue protein sequence, read N- to C-terminus: Cobyric acid synthase (476 aa).

A GATase cobBQ-type domain is found at 242 to 428 (AFRVVVPVPP…LHGLFDTPDA (187 aa)). Cys323 (nucleophile) is an active-site residue. His420 is a catalytic residue.

The protein belongs to the CobB/CobQ family. CobQ subfamily.

The protein operates within cofactor biosynthesis; adenosylcobalamin biosynthesis. In terms of biological role, catalyzes amidations at positions B, D, E, and G on adenosylcobyrinic A,C-diamide. NH(2) groups are provided by glutamine, and one molecule of ATP is hydrogenolyzed for each amidation. The polypeptide is Cobyric acid synthase (Janthinobacterium sp. (strain Marseille) (Minibacterium massiliensis)).